The chain runs to 553 residues: Thermosome subunit beta (553 aa).

The disordered stretch occupies residues 534-553 (KKSEGKTGEKKESEKGKEED).

The protein belongs to the TCP-1 chaperonin family. In terms of assembly, forms a Heterooligomeric complex of two stacked eight-membered rings.

Molecular chaperone; binds unfolded polypeptides in vitro, and has a weak ATPase activity. This is Thermosome subunit beta (thsB) from Sulfolobus acidocaldarius (strain ATCC 33909 / DSM 639 / JCM 8929 / NBRC 15157 / NCIMB 11770).